Reading from the N-terminus, the 63-residue chain is Large ribosomal subunit protein uL30 (63 aa).

It belongs to the universal ribosomal protein uL30 family. Part of the 50S ribosomal subunit.

The sequence is that of Large ribosomal subunit protein uL30 from Xanthomonas campestris pv. campestris (strain 8004).